The chain runs to 219 residues: Cytidylate kinase (219 aa).

ATP is bound at residue Gly-10 to Thr-18.

Belongs to the cytidylate kinase family. Type 1 subfamily.

Its subcellular location is the cytoplasm. The catalysed reaction is CMP + ATP = CDP + ADP. The enzyme catalyses dCMP + ATP = dCDP + ADP. This Staphylococcus aureus (strain MRSA252) protein is Cytidylate kinase.